Consider the following 44-residue polypeptide: Photosystem I reaction center subunit IX (44 aa).

Residues 7–27 traverse the membrane as a helical segment; it reads YLSTAPVLATLWFGSLAGLLI.

The protein belongs to the PsaJ family.

Its subcellular location is the plastid. The protein resides in the chloroplast thylakoid membrane. May help in the organization of the PsaE and PsaF subunits. This Cycas taitungensis (Prince sago) protein is Photosystem I reaction center subunit IX.